The sequence spans 239 residues: Probable 2-phosphosulfolactate phosphatase (239 aa).

This sequence belongs to the ComB family. Requires Mg(2+) as cofactor.

The catalysed reaction is (2R)-O-phospho-3-sulfolactate + H2O = (2R)-3-sulfolactate + phosphate. In Clostridium botulinum (strain 657 / Type Ba4), this protein is Probable 2-phosphosulfolactate phosphatase.